The sequence spans 108 residues: Large ribosomal subunit protein uL24 (108 aa).

The interval 46 to 65 is disordered; that stretch reads RHTRVQQSSRGSQSGGIVTQ. The span at 51-61 shows a compositional bias: low complexity; it reads QQSSRGSQSGG.

It belongs to the universal ribosomal protein uL24 family. In terms of assembly, part of the 50S ribosomal subunit.

Its function is as follows. One of two assembly initiator proteins, it binds directly to the 5'-end of the 23S rRNA, where it nucleates assembly of the 50S subunit. In terms of biological role, one of the proteins that surrounds the polypeptide exit tunnel on the outside of the subunit. The sequence is that of Large ribosomal subunit protein uL24 from Parafrankia sp. (strain EAN1pec).